The chain runs to 498 residues: ATP synthase subunit beta, chloroplastic (498 aa).

ATP is bound at residue 172-179 (GGAGVGKT).

The protein belongs to the ATPase alpha/beta chains family. In terms of assembly, F-type ATPases have 2 components, CF(1) - the catalytic core - and CF(0) - the membrane proton channel. CF(1) has five subunits: alpha(3), beta(3), gamma(1), delta(1), epsilon(1). CF(0) has four main subunits: a(1), b(1), b'(1) and c(9-12).

The protein resides in the plastid. The protein localises to the chloroplast thylakoid membrane. It catalyses the reaction ATP + H2O + 4 H(+)(in) = ADP + phosphate + 5 H(+)(out). In terms of biological role, produces ATP from ADP in the presence of a proton gradient across the membrane. The catalytic sites are hosted primarily by the beta subunits. This is ATP synthase subunit beta, chloroplastic from Helianthus annuus (Common sunflower).